A 99-amino-acid polypeptide reads, in one-letter code: Large ribosomal subunit protein bL28 (99 aa).

Belongs to the bacterial ribosomal protein bL28 family.

The polypeptide is Large ribosomal subunit protein bL28 (Caulobacter vibrioides (strain ATCC 19089 / CIP 103742 / CB 15) (Caulobacter crescentus)).